Reading from the N-terminus, the 37-residue chain is Large ribosomal subunit protein bL36c (37 aa).

This sequence belongs to the bacterial ribosomal protein bL36 family.

The protein resides in the plastid. It is found in the chloroplast. This Euglena gracilis protein is Large ribosomal subunit protein bL36c (rpl36).